We begin with the raw amino-acid sequence, 349 residues long: tRNA-specific 2-thiouridylase MnmA (349 aa).

ATP is bound by residues 6-13 (LLSGGVDS) and methionine 32. Residue cysteine 103 is the Nucleophile of the active site. A disulfide bridge links cysteine 103 with cysteine 195. Glycine 127 is an ATP binding site. Residues 145-147 (KDQ) are interaction with tRNA. Cysteine 195 acts as the Cysteine persulfide intermediate in catalysis.

It belongs to the MnmA/TRMU family.

It is found in the cytoplasm. It catalyses the reaction S-sulfanyl-L-cysteinyl-[protein] + uridine(34) in tRNA + AH2 + ATP = 2-thiouridine(34) in tRNA + L-cysteinyl-[protein] + A + AMP + diphosphate + H(+). In terms of biological role, catalyzes the 2-thiolation of uridine at the wobble position (U34) of tRNA, leading to the formation of s(2)U34. This Pseudothermotoga lettingae (strain ATCC BAA-301 / DSM 14385 / NBRC 107922 / TMO) (Thermotoga lettingae) protein is tRNA-specific 2-thiouridylase MnmA.